Reading from the N-terminus, the 157-residue chain is Endoribonuclease YbeY (157 aa).

3 residues coordinate Zn(2+): histidine 114, histidine 118, and histidine 124.

The protein belongs to the endoribonuclease YbeY family. It depends on Zn(2+) as a cofactor.

It localises to the cytoplasm. Its function is as follows. Single strand-specific metallo-endoribonuclease involved in late-stage 70S ribosome quality control and in maturation of the 3' terminus of the 16S rRNA. The chain is Endoribonuclease YbeY from Caulobacter vibrioides (strain ATCC 19089 / CIP 103742 / CB 15) (Caulobacter crescentus).